A 586-amino-acid chain; its full sequence is Solute carrier family 13 member 2 (586 aa).

Transmembrane regions (helical) follow at residues 13–33, 53–73, and 86–106; these read SYLI…IVQT, ALPL…MGIM, and TNIL…WNLH. Residues 165 to 175 show a composition bias toward polar residues; the sequence is DVEEGNSNPSF. The disordered stretch occupies residues 165–209; that stretch reads DVEEGNSNPSFELQEASPQKEETKLDNGQAVSVSSEPRAQKTKEH. Transmembrane regions (helical) follow at residues 215 to 235, 264 to 284, 319 to 339, 366 to 386, 407 to 427, 445 to 465, 478 to 498, 506 to 526, and 535 to 555; these read GLSL…LTGT, FAFP…QVLF, PMSF…VLWF, GTVA…IPGL, TVND…FALA, PLQH…VAIF, FLPI…YVML, LAFM…FGGL, and GFLL…SWSI.

The protein belongs to the SLC13A/DASS transporter (TC 2.A.47) family. NADC subfamily. As to expression, highly expressed in kidney and small intestine. Not detectable in brain, heart, stomach and skeletal muscle.

Its subcellular location is the apical cell membrane. The catalysed reaction is succinate(out) + 3 Na(+)(out) = succinate(in) + 3 Na(+)(in). It carries out the reaction fumarate(out) + 3 Na(+)(out) = fumarate(in) + 3 Na(+)(in). It catalyses the reaction 2-oxoglutarate(out) + 3 Na(+)(out) = 2-oxoglutarate(in) + 3 Na(+)(in). Its activity is regulated as follows. Li(+) decreases succinate transport in the presence of Na(+), by competing at one of the three cation binding sites. In terms of biological role, low-affinity sodium-dicarboxylate cotransporter, that mediates the entry of citric acid cycle intermediates, such as succinate, citrate, fumarate and alpha-ketoglutarate (2-oxoglutarate) into the small intestine and renal proximal tubule. Can transport citrate in a Na(+)-dependent manner, recognizing the divalent form of citrate rather than the trivalent form which is normally found in blood. Transports the dicarboxylate into the cell with a probable stoichiometry of 3 Na(+) for 1 divalent dicarboxylate, rendering the process electrogenic. Has a critical role in renal dicarboxylate transport. The chain is Solute carrier family 13 member 2 (Slc13a2) from Mus musculus (Mouse).